A 257-amino-acid polypeptide reads, in one-letter code: Large ribosomal subunit protein bL28m (257 aa).

The N-terminal 55 residues, M1–K55, are a transit peptide targeting the mitochondrion.

This sequence belongs to the bacterial ribosomal protein bL28 family. In terms of assembly, component of the mitochondrial ribosome large subunit (39S) which comprises a 16S rRNA and about 50 distinct proteins. Interacts with OXA1L.

Its subcellular location is the mitochondrion. The protein is Large ribosomal subunit protein bL28m (Mrpl28) of Mus musculus (Mouse).